Here is a 384-residue protein sequence, read N- to C-terminus: Glucose-fructose oxidoreductase domain-containing protein 2 (384 aa).

Positions Met1–Ala25 are cleaved as a signal peptide. Positions Gly358–Leu384 are disordered. The span at Ser372 to Leu384 shows a compositional bias: polar residues.

Belongs to the Gfo/Idh/MocA family.

It localises to the secreted. The protein localises to the extracellular space. It is found in the extracellular matrix. Functionally, promotes matrix assembly. This is Glucose-fructose oxidoreductase domain-containing protein 2 (gfod2) from Xenopus tropicalis (Western clawed frog).